Reading from the N-terminus, the 237-residue chain is Riboflavin kinase (237 aa).

The unknown stretch occupies residues 1 to 101 (MRLKIKAIWV…SRIFSSEPDV (101 aa)). Residues 102–237 (LELEGNVLKG…VKKQGMEGQK (136 aa)) are riboflavin kinase. 111-116 (GLGEGQ) provides a ligand contact to CDP. Thr140 and Asn142 together coordinate Mg(2+). The FMN site is built by Thr197 and Glu205. CDP is bound at residue 210–213 (VKLR).

This sequence belongs to the archaeal riboflavin kinase family. Requires Mg(2+) as cofactor.

It catalyses the reaction riboflavin + CTP = CDP + FMN + H(+). The protein operates within cofactor biosynthesis; FMN biosynthesis; FMN from riboflavin (CTP route): step 1/1. In terms of biological role, catalyzes the CTP-dependent phosphorylation of riboflavin (vitamin B2) to form flavin mononucleotide (FMN). The chain is Riboflavin kinase (ribK) from Methanosarcina acetivorans (strain ATCC 35395 / DSM 2834 / JCM 12185 / C2A).